The following is a 257-amino-acid chain: ADP-dependent (S)-NAD(P)H-hydrate dehydratase (257 aa).

Residues 1–257 enclose the YjeF C-terminal domain; it reads MGRLQRTLSN…VIERIPDTIR (257 aa). Gly200 serves as a coordination point for AMP. Asp201 is a (6S)-NADPHX binding site.

This sequence belongs to the NnrD/CARKD family. As to quaternary structure, homotetramer. Mg(2+) serves as cofactor.

It carries out the reaction (6S)-NADHX + ADP = AMP + phosphate + NADH + H(+). The catalysed reaction is (6S)-NADPHX + ADP = AMP + phosphate + NADPH + H(+). Catalyzes the dehydration of the S-form of NAD(P)HX at the expense of ADP, which is converted to AMP. Together with NAD(P)HX epimerase, which catalyzes the epimerization of the S- and R-forms, the enzyme allows the repair of both epimers of NAD(P)HX, a damaged form of NAD(P)H that is a result of enzymatic or heat-dependent hydration. This Haloterrigena turkmenica (strain ATCC 51198 / DSM 5511 / JCM 9101 / NCIMB 13204 / VKM B-1734 / 4k) (Halococcus turkmenicus) protein is ADP-dependent (S)-NAD(P)H-hydrate dehydratase.